The following is a 312-amino-acid chain: MFKHETVLLHETVDMLEVKPDGIYVDATLGGAGHSEYLLNKLNEKGHLFAFDQDQTAIDNAKIKLADYSDKVTFIKANFRDMKEALNERGIEAVDGILYDLGVSSPQLDERERGFSYHQDAALDMRMDQEQELTAKIVVNEWSYQDLIRIFFQYGEEKFSKQIAREIERRREVKPIETTGELVDIIKTAIPAPARRKGGHPGKRTFQAIRIAVNDELGAVEDSLEKALTLLKPGGRISVITFHSLEDRITKQLFQEATKGPDLPPGLPVIPDEYKPDFKLATRKPIVPSEEELEQNNRARSAKLRVIEKIIK.

S-adenosyl-L-methionine is bound by residues 32–34 (AGH), aspartate 52, phenylalanine 79, aspartate 100, and glutamine 107.

Belongs to the methyltransferase superfamily. RsmH family.

It is found in the cytoplasm. It catalyses the reaction cytidine(1402) in 16S rRNA + S-adenosyl-L-methionine = N(4)-methylcytidine(1402) in 16S rRNA + S-adenosyl-L-homocysteine + H(+). Specifically methylates the N4 position of cytidine in position 1402 (C1402) of 16S rRNA. The sequence is that of Ribosomal RNA small subunit methyltransferase H from Listeria monocytogenes serotype 4b (strain F2365).